The chain runs to 63 residues: ATP synthase F(0) complex subunit 8 (63 aa).

A helical transmembrane segment spans residues 8 to 24; it reads MWLLTILSMLLTLFVLF. Position 57 is an N6-acetyllysine (Lys57).

Belongs to the ATPase protein 8 family. Component of the ATP synthase complex composed at least of ATP5F1A/subunit alpha, ATP5F1B/subunit beta, ATP5MC1/subunit c (homooctomer), MT-ATP6/subunit a, MT-ATP8/subunit 8, ATP5ME/subunit e, ATP5MF/subunit f, ATP5MG/subunit g, ATP5MK/subunit k, ATP5MJ/subunit j, ATP5F1C/subunit gamma, ATP5F1D/subunit delta, ATP5F1E/subunit epsilon, ATP5PF/subunit F6, ATP5PB/subunit b, ATP5PD/subunit d, ATP5PO/subunit OSCP. ATP synthase complex consists of a soluble F(1) head domain (subunits alpha(3) and beta(3)) - the catalytic core - and a membrane F(0) domain - the membrane proton channel (subunits c, a, 8, e, f, g, k and j). These two domains are linked by a central stalk (subunits gamma, delta, and epsilon) rotating inside the F1 region and a stationary peripheral stalk (subunits F6, b, d, and OSCP). Interacts with PRICKLE3.

It localises to the mitochondrion membrane. In terms of biological role, subunit 8, of the mitochondrial membrane ATP synthase complex (F(1)F(0) ATP synthase or Complex V) that produces ATP from ADP in the presence of a proton gradient across the membrane which is generated by electron transport complexes of the respiratory chain. ATP synthase complex consist of a soluble F(1) head domain - the catalytic core - and a membrane F(1) domain - the membrane proton channel. These two domains are linked by a central stalk rotating inside the F(1) region and a stationary peripheral stalk. During catalysis, ATP synthesis in the catalytic domain of F(1) is coupled via a rotary mechanism of the central stalk subunits to proton translocation. In vivo, can only synthesize ATP although its ATP hydrolase activity can be activated artificially in vitro. Part of the complex F(0) domain. This Balaenoptera physalus (Fin whale) protein is ATP synthase F(0) complex subunit 8.